Reading from the N-terminus, the 393-residue chain is MAQENAAFSPGQEEPPRRRGRQRYVEKDGRCNVQQGNVRETYRYLTDLFTTLVDLQWRLSLLFFVLAYALTWLFFGAIWWLIAYGRGDLEHLEDTAWTPCVNNLNGFVAAFLFSIETETTIGYGHRVITDQCPEGIVLLLLQAILGSMVNAFMVGCMFVKISQPNKRAATLVFSSHAVVSLRDGRLCLMFRVGDLRSSHIVEASIRAKLIRSRQTLEGEFIPLHQTDLSVGFDTGDDRLFLVSPLVISHEIDAASPFWEASRRALERDDFEIVVILEGMVEATGMTCQARSSYLVDEVLWGHRFTSVLTLEDGFYEVDYASFHETFEVPTPSCSARELAEAAARLDAHLYWSIPSRLDEKVEEEGAGEGAGGEAGADKEQNGCLPPPESESKV.

Positions 1 to 23 (MAQENAAFSPGQEEPPRRRGRQR) are disordered. Topologically, residues 1 to 57 (MAQENAAFSPGQEEPPRRRGRQRYVEKDGRCNVQQGNVRETYRYLTDLFTTLVDLQW) are cytoplasmic. The helical transmembrane segment at 58–82 (RLSLLFFVLAYALTWLFFGAIWWLI) threads the bilayer. Residues 83 to 106 (AYGRGDLEHLEDTAWTPCVNNLNG) are Extracellular-facing. The helical; Pore-forming intramembrane region spans 107-118 (FVAAFLFSIETE). The segment at residues 119 to 125 (TTIGYGH) is an intramembrane region (pore-forming). The short motif at 120-125 (TIGYGH) is the Selectivity filter element. Over 126–134 (RVITDQCPE) the chain is Extracellular. Residues 135–156 (GIVLLLLQAILGSMVNAFMVGC) form a helical membrane-spanning segment. The Cytoplasmic portion of the chain corresponds to 157–393 (MFVKISQPNK…LPPPESESKV (237 aa)). A disordered region spans residues 360-393 (KVEEEGAGEGAGGEAGADKEQNGCLPPPESESKV). Over residues 384-393 (LPPPESESKV) the composition is skewed to pro residues. The PDZ-binding motif lies at 390-393 (ESKV).

The protein belongs to the inward rectifier-type potassium channel (TC 1.A.2.1) family. KCNJ9 subfamily. As to quaternary structure, associates with KCNJ3/GIRK1 to form a G-protein-activated heteromultimer pore-forming unit. Interacts (via PDZ-binding motif) with SNX27 (via PDZ domain); the interaction is required when endocytosed to prevent degradation in lysosomes and promote recycling to the plasma membrane.

Its subcellular location is the membrane. It carries out the reaction K(+)(in) = K(+)(out). Functionally, inward rectifier potassium channels are characterized by a greater tendency to allow potassium to flow into the cell rather than out of it. Their voltage dependence is regulated by the concentration of extracellular potassium; as external potassium is raised, the voltage range of the channel opening shifts to more positive voltages. The inward rectification is mainly due to the blockage of outward current by internal magnesium, This receptor is controlled by G proteins. Unable to produce channel activity when expressed alone. Forms a functional channel in association with KCNJ3/GIRK1. The chain is G protein-activated inward rectifier potassium channel 3 (KCNJ9) from Homo sapiens (Human).